We begin with the raw amino-acid sequence, 161 residues long: Allophycocyanin beta chain (161 aa).

The residue at position 71 (asparagine 71) is an N4-methylasparagine. Cysteine 81 is a binding site for (2R,3E)-phycocyanobilin.

Belongs to the phycobiliprotein family. Heterodimer of an alpha and a beta chain. Contains one covalently linked phycocyanobilin chromophore.

Its subcellular location is the cellular thylakoid membrane. Its function is as follows. Light-harvesting photosynthetic bile pigment-protein from the phycobiliprotein complex. Allophycocyanin has a maximum absorption at approximately 650 nanometers. The polypeptide is Allophycocyanin beta chain (apcB) (Synechocystis sp. (strain PCC 6714) (Aphanocapsa sp. (strain PCC 6714))).